The sequence spans 103 residues: Sperm-associated antigen 11B (103 aa).

Residues 1–25 (MRQRLLPSVTSLLLVALLFPGSSQA) form the signal peptide. N-linked (GlcNAc...) asparagine glycosylation occurs at Asn-29.

Belongs to the SPAG11 family. In terms of tissue distribution, specifically expressed in caput and proximal corpus of epididymis (at protein level). Present in the epididymal epithelium and on the sperm surface, with a subacrosomal equatorial distribution on the sperm head (at protein level).

Its subcellular location is the secreted. Functionally, has antimicrobial activity against E.coli. Plays a role in the defense response in the male reproductive tract, contributing to sperm maturation, storage and protection. The chain is Sperm-associated antigen 11B from Homo sapiens (Human).